A 212-amino-acid chain; its full sequence is Uracil phosphoribosyltransferase (212 aa).

5-phospho-alpha-D-ribose 1-diphosphate contacts are provided by residues R78, R103, and 130 to 138; that span reads DPMLATGGS. Residues I193 and 198 to 200 each bind uracil; that span reads GDA. D199 provides a ligand contact to 5-phospho-alpha-D-ribose 1-diphosphate.

This sequence belongs to the UPRTase family. The cofactor is Mg(2+).

It carries out the reaction UMP + diphosphate = 5-phospho-alpha-D-ribose 1-diphosphate + uracil. It functions in the pathway pyrimidine metabolism; UMP biosynthesis via salvage pathway; UMP from uracil: step 1/1. Its activity is regulated as follows. Allosterically activated by GTP. Functionally, catalyzes the conversion of uracil and 5-phospho-alpha-D-ribose 1-diphosphate (PRPP) to UMP and diphosphate. This Pseudomonas entomophila (strain L48) protein is Uracil phosphoribosyltransferase.